We begin with the raw amino-acid sequence, 273 residues long: Hemin import ATP-binding protein HmuV (273 aa).

Positions 2–256 (LTAHHLDVAR…AHIAQCYGFA (255 aa)) constitute an ABC transporter domain. Residue 34–41 (GRNGAGKS) coordinates ATP.

It belongs to the ABC transporter superfamily. Heme (hemin) importer (TC 3.A.1.14.5) family. The complex is composed of two ATP-binding proteins (HmuV), two transmembrane proteins (HmuU) and a solute-binding protein (HmuT).

It is found in the cell inner membrane. Functionally, part of the ABC transporter complex HmuTUV involved in hemin import. Responsible for energy coupling to the transport system. This Burkholderia ambifaria (strain ATCC BAA-244 / DSM 16087 / CCUG 44356 / LMG 19182 / AMMD) (Burkholderia cepacia (strain AMMD)) protein is Hemin import ATP-binding protein HmuV.